The chain runs to 209 residues: Large ribosomal subunit protein uL4 (209 aa).

Residues 47 to 72 (TSSTKTRSEVRGSSKKPWKQKGTGRA) are disordered. Over residues 59-72 (SSKKPWKQKGTGRA) the composition is skewed to basic residues.

It belongs to the universal ribosomal protein uL4 family. In terms of assembly, part of the 50S ribosomal subunit.

Its function is as follows. One of the primary rRNA binding proteins, this protein initially binds near the 5'-end of the 23S rRNA. It is important during the early stages of 50S assembly. It makes multiple contacts with different domains of the 23S rRNA in the assembled 50S subunit and ribosome. Functionally, forms part of the polypeptide exit tunnel. The chain is Large ribosomal subunit protein uL4 from Borreliella burgdorferi (strain ZS7) (Borrelia burgdorferi).